We begin with the raw amino-acid sequence, 214 residues long: Large ribosomal subunit protein uL3 (214 aa).

The segment at 131–155 (GAQRTSHGNSRSHRVPGSIGMAQDP) is disordered. Glutamine 153 is subject to N5-methylglutamine.

Belongs to the universal ribosomal protein uL3 family. In terms of assembly, part of the 50S ribosomal subunit. Forms a cluster with proteins L14 and L19. Methylated by PrmB.

Its function is as follows. One of the primary rRNA binding proteins, it binds directly near the 3'-end of the 23S rRNA, where it nucleates assembly of the 50S subunit. The polypeptide is Large ribosomal subunit protein uL3 (Neisseria gonorrhoeae (strain ATCC 700825 / FA 1090)).